We begin with the raw amino-acid sequence, 373 residues long: Hydrogenase maturation factor HypD (373 aa).

Fe cation-binding residues include cysteine 41, cysteine 69, and cysteine 72.

This sequence belongs to the HypD family. As to quaternary structure, monomer. Interacts with HypC. Forms a complex with HypC, or HybG, and HypE. [4Fe-4S] cluster is required as a cofactor.

It functions in the pathway protein modification; [NiFe] hydrogenase maturation. Its function is as follows. Involved in the maturation of [NiFe] hydrogenases. Involved in the biosynthesis of the Fe(CN)(2)CO cofactor. HypD may act as a scaffold on which the Fe(CN)(2)CO cofactor is formed. In complex with HypC, accepts the cyanide ligand generated by HypF and HypE, and also coordinates the carbon monoxide ligand. Required for the formation of all three hydrogenase isoenzymes. This chain is Hydrogenase maturation factor HypD, found in Escherichia coli (strain K12).